Consider the following 125-residue polypeptide: Fluoride-specific ion channel FluC (125 aa).

Transmembrane regions (helical) follow at residues 1 to 21 (MIQA…RYYV), 32 to 52 (AFPW…GVFA), 68 to 88 (LLIT…LDAI), and 101 to 121 (IYIA…LAVM). The Na(+) site is built by Gly75 and Thr78.

The protein belongs to the fluoride channel Fluc/FEX (TC 1.A.43) family.

The protein resides in the cell inner membrane. It carries out the reaction fluoride(in) = fluoride(out). Its activity is regulated as follows. Na(+) is not transported, but it plays an essential structural role and its presence is essential for fluoride channel function. Its function is as follows. Fluoride-specific ion channel. Important for reducing fluoride concentration in the cell, thus reducing its toxicity. The chain is Fluoride-specific ion channel FluC from Rhizobium johnstonii (strain DSM 114642 / LMG 32736 / 3841) (Rhizobium leguminosarum bv. viciae).